An 899-amino-acid polypeptide reads, in one-letter code: Solute carrier family 12 member 9 (899 aa).

At 1-44 (MTSESSPLLHYRLFSVSDGGLGPPDSSPIMTDAVTVGTGPTQRK) the chain is on the cytoplasmic side. The helical transmembrane segment at 45 to 65 (LSTFFGVVVPTVLSMFSIVVF) threads the bilayer. Residues 66 to 80 (MRIGFVVGHAGLLQS) lie on the Extracellular side of the membrane. The helical transmembrane segment at 81-101 (LLMLFVAYVIIWLTVLSVCAI) threads the bilayer. The Cytoplasmic portion of the chain corresponds to 102–127 (STNGAVQGGGAYFMISRTLGPEFGGS). Residues 128–148 (IGLMFYLANVFACGVYVLGLV) traverse the membrane as a helical segment. Residues 149–176 (EAVLDVFGRDPSDVTDSLRSLPQGYGYS) lie on the Extracellular side of the membrane. The chain crosses the membrane as a helical span at residues 177 to 197 (FLYASIILLLCMAICLVGASI). The Cytoplasmic portion of the chain corresponds to 198-202 (YSQAS). Residues 203–223 (FFIFLLVFVVLLTILISFLAV) form a helical membrane-spanning segment. Over 224 to 266 (RPLTVSIRHGGNVTMTGVYTGINSSTLHNNLQADYSLDYTTGN) the chain is Extracellular. N-linked (GlcNAc...) asparagine glycans are attached at residues asparagine 235 and asparagine 246. A helical transmembrane segment spans residues 267-287 (LMNFATVFAVMFNGCTGIMAG). At 288–304 (CNLSGELKQPSRSIPMG) the chain is on the cytoplasmic side. The chain crosses the membrane as a helical span at residues 305–325 (TIIAVIITFFVYLILFIFTAF). The Extracellular portion of the chain corresponds to 326–347 (TCDRTLLREDYGFFRSINIWPP). The helical transmembrane segment at 348–368 (FVLIGVYATSLSASMSTLIGA) threads the bilayer. Over 369-393 (SRILHALAKDDLFGVLLAPAKLVSK) the chain is Cytoplasmic. The helical transmembrane segment at 394 to 414 (GGNPWGAVVYTWALVQLVLLA) threads the bilayer. Residues 415–419 (GKLNT) lie on the Extracellular side of the membrane. The helical transmembrane segment at 420–440 (IAGIVTVFYLIAYAAIDLACL) threads the bilayer. At 441–469 (ALEWASAPNFRPTFRFFSWHTCLLGILSS) the chain is on the cytoplasmic side. A helical membrane pass occupies residues 470-490 (LVMMFLINPAYASGSIVLLLL). The Extracellular portion of the chain corresponds to 491-739 (LLGSIHFRSS…PLDLLRPQAS (249 aa)). Residues 740-760 (AYVDVCSLFLLQMACILNMAA) traverse the membrane as a helical segment. At 761–899 (SWRRYQLRVF…GLTPVTCTEL (139 aa)) the chain is on the cytoplasmic side.

This sequence belongs to the SLC12A transporter family.

Its subcellular location is the cell membrane. It is found in the lysosome membrane. Functionally, seems to correspond to a subunit of a multimeric transport system and thus, additional subunits may be required for its function. May play a role in lysosomal ion flux and osmoregulation. The polypeptide is Solute carrier family 12 member 9 (slc12a9) (Xenopus laevis (African clawed frog)).